The chain runs to 222 residues: Peptide methionine sulfoxide reductase MsrA (222 aa).

Residue C60 is part of the active site.

This sequence belongs to the MsrA Met sulfoxide reductase family.

The enzyme catalyses L-methionyl-[protein] + [thioredoxin]-disulfide + H2O = L-methionyl-(S)-S-oxide-[protein] + [thioredoxin]-dithiol. The catalysed reaction is [thioredoxin]-disulfide + L-methionine + H2O = L-methionine (S)-S-oxide + [thioredoxin]-dithiol. Functionally, has an important function as a repair enzyme for proteins that have been inactivated by oxidation. Catalyzes the reversible oxidation-reduction of methionine sulfoxide in proteins to methionine. The sequence is that of Peptide methionine sulfoxide reductase MsrA from Pseudomonas putida (strain ATCC 47054 / DSM 6125 / CFBP 8728 / NCIMB 11950 / KT2440).